A 330-amino-acid chain; its full sequence is D-cysteine desulfhydrase (330 aa).

N6-(pyridoxal phosphate)lysine is present on Lys52.

It belongs to the ACC deaminase/D-cysteine desulfhydrase family. In terms of assembly, homodimer. Pyridoxal 5'-phosphate serves as cofactor.

The catalysed reaction is D-cysteine + H2O = hydrogen sulfide + pyruvate + NH4(+) + H(+). Catalyzes the alpha,beta-elimination reaction of D-cysteine and of several D-cysteine derivatives. It could be a defense mechanism against D-cysteine. In Serratia proteamaculans (strain 568), this protein is D-cysteine desulfhydrase.